The primary structure comprises 602 residues: DNA mismatch repair protein MutL (602 aa).

Residues 337–367 (KRPFPGSSTNYSGIQQDTKKQESDNPEKARG) are disordered. The segment covering 342-352 (GSSTNYSGIQQ) has biased composition (polar residues). Residues 353–367 (DTKKQESDNPEKARG) are compositionally biased toward basic and acidic residues.

Belongs to the DNA mismatch repair MutL/HexB family.

This protein is involved in the repair of mismatches in DNA. It is required for dam-dependent methyl-directed DNA mismatch repair. May act as a 'molecular matchmaker', a protein that promotes the formation of a stable complex between two or more DNA-binding proteins in an ATP-dependent manner without itself being part of a final effector complex. The polypeptide is DNA mismatch repair protein MutL (Kosmotoga olearia (strain ATCC BAA-1733 / DSM 21960 / TBF 19.5.1)).